Here is a 72-residue protein sequence, read N- to C-terminus: MTLWVGILVGVVALLIGVALGFFIARKYMMSYLKKNPPINEQMLRMMMMQMGMKPSQKKINQMMKAMNNQAK.

The helical transmembrane segment at 4-24 (WVGILVGVVALLIGVALGFFI) threads the bilayer.

The protein belongs to the UPF0154 family.

The protein localises to the cell membrane. This Bacillus velezensis (strain DSM 23117 / BGSC 10A6 / LMG 26770 / FZB42) (Bacillus amyloliquefaciens subsp. plantarum) protein is UPF0154 protein RBAM_017710.